Consider the following 74-residue polypeptide: Cytochrome c oxidase copper chaperone 1 (74 aa).

A disordered region spans residues 1-30 (MTDQPAQNGLIPPPTSEPSKAAASAETKPK). Cu cation is bound by residues Cys34 and Cys35. The CHCH domain occupies 34-74 (CCACPDTKKLRDECIVEHGESACTKWIEAHKICLRAEGFNV). 2 consecutive short sequence motifs (cx9C motif) follow at residues 37 to 47 (CPDTKKLRDEC) and 56 to 66 (CTKWIEAHKIC). Disulfide bonds link Cys37-Cys66 and Cys47-Cys56.

The protein belongs to the COX17 family.

Its subcellular location is the mitochondrion intermembrane space. Copper chaperone for cytochrome c oxidase (COX). Binds 2 copper ions and delivers them to the Cu(A) site of COX. Can complement the yeast mutant cox17. The chain is Cytochrome c oxidase copper chaperone 1 (COX17-1) from Arabidopsis thaliana (Mouse-ear cress).